A 479-amino-acid polypeptide reads, in one-letter code: RAC-gamma serine/threonine-protein kinase (479 aa).

S2 bears the N-acetylserine mark. The PH domain occupies 5 to 107 (TIVKEGWVQK…WTEAIQAVAD (103 aa)). C59 and C76 are oxidised to a cystine. Residues 148–405 (FDYLKLLGKG…AKEIMRHSFF (258 aa)) form the Protein kinase domain. Residues 154–162 (LGKGTFGKV) and K177 contribute to the ATP site. D271 functions as the Proton acceptor in the catalytic mechanism. An intrachain disulfide couples C293 to C307. O-linked (GlcNAc) threonine glycosylation is present at T302. Position 305 is a phosphothreonine; by PDPK1 (T305). Residue T309 is glycosylated (O-linked (GlcNAc) threonine). In terms of domain architecture, AGC-kinase C-terminal spans 406–479 (SGVNWQDVYD…QFSYSASGRE (74 aa)). The segment at 445 to 479 (TITPPEKYDDDGMDGMDNERRPHFPQFSYSASGRE) is disordered. At T447 the chain carries Phosphothreonine. S472 carries the post-translational modification Phosphoserine; by PKC/PRKCZ. A glycan (O-linked (GlcNAc) serine; alternate) is linked at S472.

It belongs to the protein kinase superfamily. AGC Ser/Thr protein kinase family. RAC subfamily. In terms of assembly, interacts (via PH domain) with TCL1A; this enhances AKT3 phosphorylation and activation. Interacts with TRAF6. Interacts with KCTD20. Interacts with BTBD10. In terms of processing, phosphorylation on Thr-305 and Ser-472 is required for full activity. Phosphorylation of the activation loop at Thr-305 by PDPK1/PDK1 is a prerequisite for full activation. Phosphorylation at Ser-472 by mTORC2 in response to growth factors plays a key role in AKT1 activation by facilitating subsequent phosphorylation of the activation loop by PDPK1/PDK1. Ubiquitinated. When fully phosphorylated and translocated into the nucleus, undergoes 'Lys-48'-polyubiquitination catalyzed by TTC3, leading to its degradation by the proteasome. Post-translationally, O-GlcNAcylation at Thr-302 and Thr-309 inhibits activating phosphorylation at Thr-305 via disrupting the interaction between AKT and PDPK1/PDK1. In terms of tissue distribution, isoform 1 is expressed in prostate, testis, uterus and mammary gland and isoform 2 is expressed in prostate, testis and mammary gland.

It is found in the nucleus. The protein resides in the cytoplasm. The protein localises to the membrane. The enzyme catalyses L-seryl-[protein] + ATP = O-phospho-L-seryl-[protein] + ADP + H(+). It catalyses the reaction L-threonyl-[protein] + ATP = O-phospho-L-threonyl-[protein] + ADP + H(+). Two specific sites, one in the kinase domain (Thr-305) and the other in the C-terminal regulatory region (Ser-472), need to be phosphorylated for its full activation. IGF-1 leads to the activation of AKT3, which may play a role in regulating cell survival. Its function is as follows. AKT3 is one of 3 closely related serine/threonine-protein kinases (AKT1, AKT2 and AKT3) called the AKT kinase, and which regulate many processes including metabolism, proliferation, cell survival, growth and angiogenesis. This is mediated through serine and/or threonine phosphorylation of a range of downstream substrates. Over 100 substrate candidates have been reported so far, but for most of them, no isoform specificity has been reported. AKT3 is the least studied AKT isoform. It plays an important role in brain development and is crucial for the viability of malignant glioma cells. AKT3 isoform may also be the key molecule in up-regulation and down-regulation of MMP13 via IL13. Required for the coordination of mitochondrial biogenesis with growth factor-induced increases in cellular energy demands. Down-regulation by RNA interference reduces the expression of the phosphorylated form of BAD, resulting in the induction of caspase-dependent apoptosis. The polypeptide is RAC-gamma serine/threonine-protein kinase (Akt3) (Mus musculus (Mouse)).